Here is a 376-residue protein sequence, read N- to C-terminus: DNA replication and repair protein RecF (376 aa).

30 to 37 contacts ATP; that stretch reads GHNGVGKT.

This sequence belongs to the RecF family.

The protein resides in the cytoplasm. Functionally, the RecF protein is involved in DNA metabolism; it is required for DNA replication and normal SOS inducibility. RecF binds preferentially to single-stranded, linear DNA. It also seems to bind ATP. This is DNA replication and repair protein RecF from Salinispora arenicola (strain CNS-205).